The chain runs to 203 residues: Shikimate kinase (203 aa).

32-37 contacts ATP; it reads GAGKTA. A Mg(2+)-binding site is contributed by T36. Substrate is bound by residues D54, R78, and G100. R138 is a binding site for ATP. Residue R157 coordinates substrate.

The protein belongs to the shikimate kinase family. As to quaternary structure, monomer. Requires Mg(2+) as cofactor.

The protein resides in the cytoplasm. The enzyme catalyses shikimate + ATP = 3-phosphoshikimate + ADP + H(+). The protein operates within metabolic intermediate biosynthesis; chorismate biosynthesis; chorismate from D-erythrose 4-phosphate and phosphoenolpyruvate: step 5/7. In terms of biological role, catalyzes the specific phosphorylation of the 3-hydroxyl group of shikimic acid using ATP as a cosubstrate. This chain is Shikimate kinase, found in Mesorhizobium japonicum (strain LMG 29417 / CECT 9101 / MAFF 303099) (Mesorhizobium loti (strain MAFF 303099)).